We begin with the raw amino-acid sequence, 545 residues long: Probable protein kinase UbiB (545 aa).

The region spanning 123–501 is the Protein kinase domain; it reads DFEPIALASA…QIKQRQSQYL (379 aa). ATP is bound by residues 129–137 and K152; that span reads LASASIAQV. D287 functions as the Proton acceptor in the catalytic mechanism. A helical membrane pass occupies residues 508–528; sequence LFLCGSLFLLSGLANIPWLFI.

This sequence belongs to the ABC1 family. UbiB subfamily.

The protein localises to the cell inner membrane. Its pathway is cofactor biosynthesis; ubiquinone biosynthesis [regulation]. Functionally, is probably a protein kinase regulator of UbiI activity which is involved in aerobic coenzyme Q (ubiquinone) biosynthesis. This Photorhabdus laumondii subsp. laumondii (strain DSM 15139 / CIP 105565 / TT01) (Photorhabdus luminescens subsp. laumondii) protein is Probable protein kinase UbiB.